The following is an 83-amino-acid chain: MTIFNSISSISNPTRTALSSINTYNYNGSSVNDNSTAYFDNDFGGWGGLGDFGNGNGCGGGSSNVNVINLDIDFGRRRHRRCC.

It belongs to the UPF0512 family.

The chain is UPF0512 protein I from Dictyostelium discoideum (Social amoeba).